Consider the following 240-residue polypeptide: Large ribosomal subunit protein uL2 (240 aa).

The segment covering Met1–Gly11 has biased composition (polar residues). Disordered stretches follow at residues Met1–Gly26 and Gly206–Lys240. Composition is skewed to basic residues over residues Gly13–Gly26 and Lys228–Lys240.

This sequence belongs to the universal ribosomal protein uL2 family. In terms of assembly, part of the 50S ribosomal subunit. Forms a bridge to the 30S subunit in the 70S ribosome.

Functionally, one of the primary rRNA binding proteins. Required for association of the 30S and 50S subunits to form the 70S ribosome, for tRNA binding and peptide bond formation. It has been suggested to have peptidyltransferase activity; this is somewhat controversial. Makes several contacts with the 16S rRNA in the 70S ribosome. The chain is Large ribosomal subunit protein uL2 from Methanococcus vannielii (strain ATCC 35089 / DSM 1224 / JCM 13029 / OCM 148 / SB).